A 269-amino-acid polypeptide reads, in one-letter code: 4-hydroxy-tetrahydrodipicolinate reductase (269 aa).

Residues 8-13 (GAAGRM) and E34 each bind NAD(+). R35 provides a ligand contact to NADP(+). NAD(+) contacts are provided by residues 98–100 (GTT) and 122–125 (APNY). The active-site Proton donor/acceptor is the H155. H156 serves as a coordination point for (S)-2,3,4,5-tetrahydrodipicolinate. K159 serves as the catalytic Proton donor. Residue 165–166 (GT) participates in (S)-2,3,4,5-tetrahydrodipicolinate binding.

It belongs to the DapB family.

The protein resides in the cytoplasm. It catalyses the reaction (S)-2,3,4,5-tetrahydrodipicolinate + NAD(+) + H2O = (2S,4S)-4-hydroxy-2,3,4,5-tetrahydrodipicolinate + NADH + H(+). It carries out the reaction (S)-2,3,4,5-tetrahydrodipicolinate + NADP(+) + H2O = (2S,4S)-4-hydroxy-2,3,4,5-tetrahydrodipicolinate + NADPH + H(+). It functions in the pathway amino-acid biosynthesis; L-lysine biosynthesis via DAP pathway; (S)-tetrahydrodipicolinate from L-aspartate: step 4/4. Its function is as follows. Catalyzes the conversion of 4-hydroxy-tetrahydrodipicolinate (HTPA) to tetrahydrodipicolinate. This chain is 4-hydroxy-tetrahydrodipicolinate reductase, found in Vibrio cholerae serotype O1 (strain ATCC 39541 / Classical Ogawa 395 / O395).